The chain runs to 431 residues: UDP-N-acetylglucosamine 1-carboxyvinyltransferase (431 aa).

Residue 22–23 (KN) participates in phosphoenolpyruvate binding. Residue R102 coordinates UDP-N-acetyl-alpha-D-glucosamine. The Proton donor role is filled by C126. Position 126 is a 2-(S-cysteinyl)pyruvic acid O-phosphothioketal (C126). UDP-N-acetyl-alpha-D-glucosamine-binding residues include D318 and I340.

It belongs to the EPSP synthase family. MurA subfamily.

The protein localises to the cytoplasm. The catalysed reaction is phosphoenolpyruvate + UDP-N-acetyl-alpha-D-glucosamine = UDP-N-acetyl-3-O-(1-carboxyvinyl)-alpha-D-glucosamine + phosphate. Its pathway is cell wall biogenesis; peptidoglycan biosynthesis. Its function is as follows. Cell wall formation. Adds enolpyruvyl to UDP-N-acetylglucosamine. In Bartonella tribocorum (strain CIP 105476 / IBS 506), this protein is UDP-N-acetylglucosamine 1-carboxyvinyltransferase.